Consider the following 687-residue polypeptide: Adhesion G-protein coupled receptor G1 (687 aa).

A signal peptide spans 1–25 (MTAQSLLQTTLFLLSLLFLVQGAHG). 26–33 (RGHREDFR) is a binding site for heparin. Topologically, residues 26-402 (RGHREDFRFC…VEVDAVHKHY (377 aa)) are extracellular. 2 disulfides stabilise this stretch: Cys-35-Cys-91 and Cys-121-Cys-177. N-linked (GlcNAc...) asparagine glycosylation is found at Asn-39, Asn-148, Asn-156, and Asn-171. 190–200 (LKHPQKASRRP) is a heparin binding site. A GAIN-B domain is found at 224 to 395 (DTVSFEEDRV…AVLMVSSVEV (172 aa)). 4 N-linked (GlcNAc...) asparagine glycosylation sites follow: Asn-234, Asn-303, Asn-324, and Asn-341. 2 disulfides stabilise this stretch: Cys-346-Cys-377 and Cys-366-Cys-379. The GPS stretch occupies residues 346–395 (CVFWVEDPTLSNPGRWSSAGCETVRRETQTSCFCNHLTYFAVLMVSSVEV). The tract at residues 384–397 (YFAVLMVSSVEVDA) is stachel. Residues 403–423 (LSLLSYVGCVVSALACVVTIA) traverse the membrane as a helical segment. Residues 424–442 (AYLCSRRKPRDYTIKVHMN) are Cytoplasmic-facing. A helical transmembrane segment spans residues 443–463 (LLLAVFLLDVSFLLSEPVALT). Residues 464-470 (GSQSGCR) lie on the Extracellular side of the membrane. Residues 471-491 (ASAIFLHFSLLACLSWMGLEG) traverse the membrane as a helical segment. Residues 492 to 512 (YNLYRLVVEVFGTYIPGYLLK) lie on the Cytoplasmic side of the membrane. A helical membrane pass occupies residues 513-533 (LSAMGWGFPIFLVTLVALVDV). At 534–570 (DNYGPIILAVHRTPESVIYPSMCWIRDSLVSYITNLG) the chain is on the extracellular side. A helical membrane pass occupies residues 571-591 (LFSLVFLFNMAMLGTMVVQIL). The Cytoplasmic portion of the chain corresponds to 592–603 (RLRPHTQKWSHV). The helical transmembrane segment at 604 to 624 (LTLLGLSLVLGLPWALIFFSF) threads the bilayer. Over 625-630 (ASGTFQ) the chain is Extracellular. A helical membrane pass occupies residues 631 to 651 (LVVLYLFSIITSFQGFLIFLW). Over 652 to 687 (YWSMRLQARGGPSPLKSNSDSARLPISTGSTSSSRI) the chain is Cytoplasmic. The tract at residues 664–687 (SPLKSNSDSARLPISTGSTSSSRI) is disordered. A compositionally biased stretch (polar residues) spans 666–687 (LKSNSDSARLPISTGSTSSSRI).

Belongs to the G-protein coupled receptor 2 family. LN-TM7 subfamily. Heterodimer of 2 chains generated by proteolytic processing; the large extracellular N-terminal fragment (ADGRG1 NT) and the membrane-bound C-terminal fragment (ADGRG1-CT) predominantly remain associated and non-covalently linked. ADGRG1 NT self-associates in a trans-trans manner; the homophilic interaction enhances receptor signaling. Interacts with TGM2. Interacts with heparin; leading to the reduction of ADGRG1 shedding. Interacts with COL3A1. Part of a GPCR-tetraspanin complex at least consisting of ADGRG1, CD81, eventually CD9, and GNA11 in which CD81 is enhancing the association of ADGRG1 with GNA11. In terms of processing, autoproteolytically cleaved into 2 fragments; the large extracellular N-terminal fragment (ADGRG1 NT) and the membrane-bound C-terminal fragment (ADGRG1 CT) predominantly remain associated and non-covalently linked. Shedding to yield the secreted ADGRG1 N-terminal fragment seems to involve metalloprotease(s). Ubiquitinated. Undergoes polyubiquitination upon activation.

It localises to the cell membrane. It is found in the secreted. The protein resides in the membrane raft. Forms a heterodimer of 2 chains generated by proteolytic processing that remain associated through non-covalent interactions mediated by the GAIN-B domain. In the inactivated receptor, the Stachel sequence (also named stalk) is embedded in the GAIN-B domain, where it adopts a beta-strand conformation. On activation, the Stachel moves into the 7 transmembrane region and adopts a twisted hook-shaped configuration that forms contacts within the receptor, leading to coupling of a G-alpha protein, which activates signaling. The cleaved GAIN-B and N-terminal domains can then dissociate from the rest of the receptor. Adhesion G-protein coupled receptor (aGPCR) for steroid hormone 17alpha-hydroxypregnenolone (17-OH), which is involved in cell adhesion and cell-cell interactions. Ligand binding causes a conformation change that triggers signaling via guanine nucleotide-binding proteins (G proteins) and modulates the activity of downstream effectors, such as RhoA pathway. ADGRG1 is coupled to G(12) and/or G(13) G proteins (GNA12 and GNA13, respectively) and mediates the activation Rho small GTPases. Acts as a potent suppressor of ferroptosis: binding to 17-OH-binding initiates signaling that down-regulates CD36 and alleviates ferroptosis-induced liver injury. Ligand-binding also induces cell adhesion activity via association with proteins such as collagen III/COL3A1 and TGM2. Mediates cell matrix adhesion in developing neurons and hematopoietic stem cells. Involved in cortical development, specifically in maintenance of the pial basement membrane integrity and in cortical lamination: association with COL3A1 in the developing brain inhibits neuronal migration via activation of the RhoA pathway. Together with TGM2, acts as a regulator of myelination and myelin repair in oligodendrocyte precursor cells. Acts as a hemostatic sensor of shear force: G protein-coupled receptor signaling is activated in response to shear force in platelets, promoting G(13) G protein signaling, and platelet shape change and aggregation in a COL3A1-dependent manner. Acts as an inhibitor of VEGFA production thereby inhibiting angiogenesis through a signaling pathway mediated by PRKCA. Plays a role in the maintenance of hematopoietic stem cells in bone marrow niche. Plays an essential role in testis development. In Macaca mulatta (Rhesus macaque), this protein is Adhesion G-protein coupled receptor G1 (ADGRG1).